The chain runs to 692 residues: UvrABC system protein B (692 aa).

Residues 32 to 187 enclose the Helicase ATP-binding domain; sequence ENIENGEKAQ…LLNDLVGIQF (156 aa). 45-52 provides a ligand contact to ATP; sequence GATGTGKT. Positions 98-121 match the Beta-hairpin motif; it reads YYDYYQPEAYVPSSDTYIEKDSSV. Residues 436 to 631 form the Helicase C-terminal domain; sequence QIDDLVGEIH…TIKKEIRDLI (196 aa). Residues 656 to 691 enclose the UVR domain; that stretch reads KALVKKLEKEMQQAAAALDFEGAAQLRDMVLELRAM.

This sequence belongs to the UvrB family. In terms of assembly, forms a heterotetramer with UvrA during the search for lesions. Interacts with UvrC in an incision complex.

It is found in the cytoplasm. Its function is as follows. The UvrABC repair system catalyzes the recognition and processing of DNA lesions. A damage recognition complex composed of 2 UvrA and 2 UvrB subunits scans DNA for abnormalities. Upon binding of the UvrA(2)B(2) complex to a putative damaged site, the DNA wraps around one UvrB monomer. DNA wrap is dependent on ATP binding by UvrB and probably causes local melting of the DNA helix, facilitating insertion of UvrB beta-hairpin between the DNA strands. Then UvrB probes one DNA strand for the presence of a lesion. If a lesion is found the UvrA subunits dissociate and the UvrB-DNA preincision complex is formed. This complex is subsequently bound by UvrC and the second UvrB is released. If no lesion is found, the DNA wraps around the other UvrB subunit that will check the other stand for damage. The sequence is that of UvrABC system protein B from Lactococcus lactis subsp. cremoris (strain MG1363).